The following is a 151-amino-acid chain: uncharacterized protein (151 aa).

This is an uncharacterized protein from Gallid herpesvirus 2 (strain GA) (GaHV-2).